The primary structure comprises 715 residues: MQKIVSFLKKKKEPNSWSNFDRSDDKSKSLSKKGSLYANGNYDGGGSGSGSGGSSSNSSGSSRKINTGGNNRNGGGMVHSPSNSSISSTSSNNSNSTTASSSSKLKGNKNRNSSGKQKNSSSQHQQYGNTYYLDDECDSDDFIPGEVRSISKTIDFSKSERKWLTSLNIPQELLDGNINVLLNVLNFLSKKEGILYIQTPTNIINNTGKKNFQQQQLQQLQQQQQQQQLQQQQHQQHNHQIYGNGNNNNLNVNVNVNGNNNNSNNNNGNYTSYVNSRSNSIASNNSSITPSTSCSNLNNDNNNNNNNNCTDNNSNNNNNNNNNNSTTTTTTITNTNVNMIGASNINSSKSNLNSLLLSGGSNGNGGVDNLSSTTTSLSQNPPIQPMRRSDYNRIFIEPGKFYIFPESESFALARLVVEEEDPSKLFRIGENAEVKGAFGTVYQVFYVNGQYNNVDVALKKMDHKSEKKRRNNLNEISILRYLKHPNIVTYINSYEKNDEEIWMVMEYMDGGTIRDAISNFTFTEKYVAYITKEILHSLEYLASLNIAHRDLKSSNIMINSKAEVKLIDFGFSIDLTHLKQDINMCGSPFYMSPEQIQDKAHGLAVDIWSLGIVVAEMVRGRVPHHKSKIKAMFLAGTVGVKFSKEKKYSCHWSPELFDFLNVCLQMDPTKRPTPTQLLQHPFIATAATKAETLDLLPLLFMSKTLSKLSRGRDNQ.

3 disordered regions span residues 1–125 (MQKI…SQHQ), 228–330 (QLQQ…TTTT), and 366–385 (GVDN…PIQP). Gly residues predominate over residues 42–53 (YDGGGSGSGSGG). 2 stretches are compositionally biased toward low complexity: residues 54-70 (SSSN…TGGN) and 80-125 (SPSN…SQHQ). Residues 207–241 (TGKKNFQQQQLQQLQQQQQQQQLQQQQHQQHNHQI) are a coiled coil. Residues 367–378 (VDNLSSTTTSLS) show a composition bias toward low complexity. Residues 427 to 683 (RIGENAEVKG…PTQLLQHPFI (257 aa)) form the Protein kinase domain. ATP contacts are provided by residues 433–441 (EVKGAFGTV) and lysine 459. Aspartate 550 serves as the catalytic Proton acceptor.

It belongs to the protein kinase superfamily. STE Ser/Thr protein kinase family. STE20 subfamily. Requires Mg(2+) as cofactor.

It catalyses the reaction L-seryl-[protein] + ATP = O-phospho-L-seryl-[protein] + ADP + H(+). It carries out the reaction L-threonyl-[protein] + ATP = O-phospho-L-threonyl-[protein] + ADP + H(+). The protein is Probable serine/threonine-protein kinase mkcE of Dictyostelium discoideum (Social amoeba).